The chain runs to 606 residues: MPKRELWPAGLCSEPVTHIGSCGDMMSTTSTRSGSSDSSYDFLSAEEKECLLFLEKTIGSLEAEADSGLSTDESEPATSPRSFRALPTATQQAPQGKPEATDIQQVPVPKRVAQPSCPPESHSLGLRAGSYSLPRNLHLGRSQNLRESATQANSPVSEASEVFLEEPEKGQTSQGAKAKTIQPPAPSQKGTLDLSTVLIPPPEAFQDIRPKESGEESPPKKPGEQTHTPQVHSLERSPHSQKKVEMSSETVSHKATEKGWTEGLQQPQQPPAQSSQPTKAEELSLPSGVKPSIQQTPLTASKARKLPPNIVLKSSRSSFHSHPQNWLSNHTEATDSGPVSSLQEQRKARREALEKLGLPQDQDDPSLLVNKHTSTLKVREAQPQTPSQARAPARPASPALVSGTASAAGKVSPKKAVAPMDSLSKGWIPTQETPPGKVAEAKSMPIPIPKTLKENSSRTQPKPDPRLTLQESSIPGLRQMNFKSNTLERSGVGLSSYLSAAEKKDPSCQTSTSLGKSPFLDKVSPSAFRNSRPRPASLGMGKDFAGIQGGKLVGLEQDQCSQQPSFKGQSYDKLPRPPCISVKISPKGIPDGHRREALKKLGLLKE.

Disordered stretches follow at residues 64 to 488 (EADS…NTLE), 500 to 543 (AAEK…MGKD), and 555 to 574 (LEQDQCSQQPSFKGQSYDKL). Polar residues predominate over residues 68 to 81 (GLSTDESEPATSPR). Phosphoserine is present on residues Ser-130 and Ser-132. Polar residues predominate over residues 141–157 (RSQNLRESATQANSPVS). 2 stretches are compositionally biased toward basic and acidic residues: residues 206–224 (QDIRPKESGEESPPKKPGE) and 233–260 (SLERSPHSQKKVEMSSETVSHKATEKGW). The segment covering 265–277 (QQPQQPPAQSSQP) has biased composition (low complexity). A compositionally biased stretch (polar residues) spans 312–331 (LKSSRSSFHSHPQNWLSNHT). Thr-334 carries the post-translational modification Phosphothreonine. The span at 344 to 354 (EQRKARREALE) shows a compositional bias: basic and acidic residues. Low complexity predominate over residues 381-399 (AQPQTPSQARAPARPASPA). Ser-397 and Ser-412 each carry phosphoserine. Residues 451–465 (TLKENSSRTQPKPDP) are compositionally biased toward basic and acidic residues. Ser-524 carries the post-translational modification Phosphoserine. Polar residues predominate over residues 558–568 (DQCSQQPSFKG).

Belongs to the SARG family.

Its subcellular location is the cytoplasm. Its function is as follows. Putative androgen-specific receptor. This is Specifically androgen-regulated gene protein (Sarg) from Mus musculus (Mouse).